The sequence spans 182 residues: Probable peptidyl-prolyl cis-trans isomerase A (182 aa).

The 169-residue stretch at 13 to 181 (ATATATLHTN…DPVVIESITI (169 aa)) folds into the PPIase cyclophilin-type domain.

Belongs to the cyclophilin-type PPIase family.

The protein localises to the cytoplasm. It carries out the reaction [protein]-peptidylproline (omega=180) = [protein]-peptidylproline (omega=0). In terms of biological role, PPIases accelerate the folding of proteins. It catalyzes the cis-trans isomerization of proline imidic peptide bonds in oligopeptides. This chain is Probable peptidyl-prolyl cis-trans isomerase A (ppiA), found in Mycobacterium bovis (strain ATCC BAA-935 / AF2122/97).